Consider the following 449-residue polypeptide: MDLRPELPTASSASQVHPGAAAAAAAASIPVSMAGNLLRGPPLLLRAADKYPRTPKCARCRNHGVVSALKGHKRYCRWKDCMCAKCTLIAERQRVMAAQVALRRQQAQEESEARELQLLYGTAEGPAIAAANGIIPPRPNYEVFGSVSSESNSADSSIQKYELFPKNQLSGSATPQPSAGKPASTEGDSAPGISSPDGRHGGSGSENGDSESFISSPVSKPLKDGEETPGSVSSIGSDSGSETDKDDQEPSPSSAASRHMNAIDILTRVFPSHKRSVLELVLQGCGKDVVQAIEQILNNSGAQGPNKAGPDETWTAERMLQNAQQLPAASATTTAPTRPMLPGAMTLSNRSAFSPLQPNAPHFGADPSTYPLGTHLGLNPLRLAYSAHSRGLAFMTPYSTTGLMPTLGFRPPMYYAFSDLIRDRTMLHKEQGYASGLYGPLVNNTPEKQ.

The segment at residues 57-104 (CARCRNHGVVSALKGHKRYCRWKDCMCAKCTLIAERQRVMAAQVALRR) is a DNA-binding region (DM). Residues 166–259 (KNQLSGSATP…PSPSSAASRH (94 aa)) form a disordered region. Residues 167 to 177 (NQLSGSATPQP) are compositionally biased toward polar residues. Low complexity predominate over residues 230-240 (GSVSSIGSDSG). One can recognise a DMA domain in the interval 260 to 295 (MNAIDILTRVFPSHKRSVLELVLQGCGKDVVQAIEQ).

The protein belongs to the DMRT family.

It is found in the nucleus. Its function is as follows. May be involved in sexual development. In Oreochromis niloticus (Nile tilapia), this protein is Doublesex- and mab-3-related transcription factor A2 (dmrta2).